Here is a 339-residue protein sequence, read N- to C-terminus: Phenylalanine--tRNA ligase alpha subunit (339 aa).

Glutamate 247 is a binding site for Mg(2+).

The protein belongs to the class-II aminoacyl-tRNA synthetase family. Phe-tRNA synthetase alpha subunit type 1 subfamily. As to quaternary structure, tetramer of two alpha and two beta subunits. Requires Mg(2+) as cofactor.

It is found in the cytoplasm. It carries out the reaction tRNA(Phe) + L-phenylalanine + ATP = L-phenylalanyl-tRNA(Phe) + AMP + diphosphate + H(+). This Deinococcus radiodurans (strain ATCC 13939 / DSM 20539 / JCM 16871 / CCUG 27074 / LMG 4051 / NBRC 15346 / NCIMB 9279 / VKM B-1422 / R1) protein is Phenylalanine--tRNA ligase alpha subunit (pheS).